A 152-amino-acid chain; its full sequence is Psoriasis susceptibility 1 candidate gene 1 protein (152 aa).

The segment covering M1–P31 has biased composition (polar residues). The tract at residues M1–N42 is disordered.

Expressed in skin. Also found in heart, placenta, liver, skeletal muscle and pancreas.

In Homo sapiens (Human), this protein is Psoriasis susceptibility 1 candidate gene 1 protein (PSORS1C1).